We begin with the raw amino-acid sequence, 246 residues long: Eukaryotic translation initiation factor 6 (246 aa).

Phosphoserine; by CK1 is present on residues Ser-174 and Ser-175.

This sequence belongs to the eIF-6 family. As to quaternary structure, monomer. Associates with the 60S ribosomal subunit. Post-translationally, phosphorylation at Ser-174 and Ser-175 promotes nuclear export.

It localises to the cytoplasm. Its subcellular location is the nucleus. It is found in the nucleolus. Its function is as follows. Binds to the 60S ribosomal subunit and prevents its association with the 40S ribosomal subunit to form the 80S initiation complex in the cytoplasm. Is also involved in ribosome biogenesis. Associates with pre-60S subunits in the nucleus and is involved in its nuclear export. This is Eukaryotic translation initiation factor 6 from Verticillium alfalfae (strain VaMs.102 / ATCC MYA-4576 / FGSC 10136) (Verticillium wilt of alfalfa).